The following is an 87-amino-acid chain: NADH-ubiquinone oxidoreductase chain 4L (87 aa).

2 helical membrane passes run 22–42 (FLSFLILMEFLVITVLFFIIG) and 49–69 (LFLIFLVFSVCELVLGLSLLV).

It belongs to the complex I subunit 4L family.

It is found in the mitochondrion membrane. The catalysed reaction is a ubiquinone + NADH + 5 H(+)(in) = a ubiquinol + NAD(+) + 4 H(+)(out). In terms of biological role, core subunit of the mitochondrial membrane respiratory chain NADH dehydrogenase (Complex I) that is believed to belong to the minimal assembly required for catalysis. Complex I functions in the transfer of electrons from NADH to the respiratory chain. The immediate electron acceptor for the enzyme is believed to be ubiquinone. The polypeptide is NADH-ubiquinone oxidoreductase chain 4L (ND4L) (Apis mellifera ligustica (Common honeybee)).